The primary structure comprises 219 residues: Kappa-scoloptoxin(11)-Ss1a (219 aa).

The first 16 residues, 1-16 (MFYSHLLFFTFTFACS), serve as a signal peptide directing secretion. The propeptide occupies 17 to 25 (SSLNRKTKR).

Post-translationally, contains 8 disulfide bonds. Expressed by the venom gland.

It localises to the secreted. Voltage-gated potassium channel inhibitor. This Scolopendra dehaani (Thai centipede) protein is Kappa-scoloptoxin(11)-Ss1a.